The following is a 235-amino-acid chain: Phosphoglycolate phosphatase (235 aa).

Catalysis depends on D14, which acts as the Nucleophile. Mg(2+) is bound by residues D14, D16, and D177.

This sequence belongs to the HAD-like hydrolase superfamily. CbbY/CbbZ/Gph/YieH family. Mg(2+) is required as a cofactor.

It catalyses the reaction 2-phosphoglycolate + H2O = glycolate + phosphate. Its pathway is organic acid metabolism; glycolate biosynthesis; glycolate from 2-phosphoglycolate: step 1/1. Functionally, specifically catalyzes the dephosphorylation of 2-phosphoglycolate. Is involved in the dissimilation of the intracellular 2-phosphoglycolate formed during the DNA repair of 3'-phosphoglycolate ends, a major class of DNA lesions induced by oxidative stress. The chain is Phosphoglycolate phosphatase from Neisseria meningitidis serogroup A / serotype 4A (strain DSM 15465 / Z2491).